Consider the following 348-residue polypeptide: UDP-rhamnose/UDP-galactose transporter 2 (348 aa).

The next 10 helical transmembrane spans lie at 12–32 (AVSD…IIMA), 44–64 (FSFA…VGMV), 81–101 (LLWF…SLML), 104–124 (VGFY…MEWV), 133–153 (EVKA…VTDV), 160–180 (FICA…IGSL), 196–216 (APIQ…FLSG), 230–250 (LCIL…YLCI), 257–277 (SFQV…WLIF), and 286–306 (IAGM…VELE).

The protein belongs to the TPT transporter family. TPT (TC 2.A.7.9) subfamily.

The protein resides in the golgi apparatus membrane. Functionally, nucleotide-sugar transporter that transports UDP-rhamnose or UDP-galactose and UMP in a strict counter-exchange mode. This Arabidopsis thaliana (Mouse-ear cress) protein is UDP-rhamnose/UDP-galactose transporter 2.